The primary structure comprises 100 residues: Insertion element IS600 uncharacterized 11 kDa protein (100 aa).

It belongs to the transposase 8 family.

The sequence is that of Insertion element IS600 uncharacterized 11 kDa protein from Shigella sonnei.